Here is a 20-residue protein sequence, read N- to C-terminus: Alpha-1B-glycoprotein (20 aa).

The disordered stretch occupies residues 1–20 (AVVFDPQPALWAEADTQLEP).

Interacts with CRISP3. In terms of processing, glycosylated. In terms of tissue distribution, plasma.

The protein localises to the secreted. The protein is Alpha-1B-glycoprotein (A1BG) of Equus asinus (Donkey).